Consider the following 472-residue polypeptide: Glycosyl hydrolase family 109 protein (472 aa).

A signal peptide (tat-type signal) is located at residues 1-35 (MSQTPAVSRRLLLGSAAATGALATGIGSAAPVAAA). NAD(+) contacts are provided by residues 68-69 (NR), D90, 139-142 (WEFH), H145, 159-160 (EL), and N188. Substrate is bound by residues Y217, R236, 248–251 (YPMH), and Y330. Y248 is an NAD(+) binding site.

The protein belongs to the Gfo/Idh/MocA family. Glycosyl hydrolase 109 subfamily. It depends on NAD(+) as a cofactor. Predicted to be exported by the Tat system. The position of the signal peptide cleavage has not been experimentally proven.

Functionally, glycosidase. Has no alpha-N-acetylgalactosaminidase activity. The protein is Glycosyl hydrolase family 109 protein of Streptomyces coelicolor (strain ATCC BAA-471 / A3(2) / M145).